The chain runs to 144 residues: Large ribosomal subunit protein uL15 (144 aa).

The segment at 1–51 is disordered; the sequence is MRLNTIKPGAGSKSAGKRVGRGIGSGLGKTCGRGHKGQKSRAGGFHKVGFE. Gly residues predominate over residues 21–31; sequence RGIGSGLGKTC.

The protein belongs to the universal ribosomal protein uL15 family. Part of the 50S ribosomal subunit.

Functionally, binds to the 23S rRNA. This chain is Large ribosomal subunit protein uL15, found in Azoarcus sp. (strain BH72).